A 393-amino-acid polypeptide reads, in one-letter code: Methylthioribose kinase (393 aa).

ATP contacts are provided by residues N38, K53, and 107 to 109; that span reads EDL. D225 lines the substrate pocket. An ATP-binding site is contributed by 242–244; the sequence is DPE. Position 332 (R332) interacts with substrate.

It belongs to the methylthioribose kinase family. As to quaternary structure, homodimer.

The enzyme catalyses 5-(methylsulfanyl)-D-ribose + ATP = 5-(methylsulfanyl)-alpha-D-ribose 1-phosphate + ADP + H(+). It functions in the pathway amino-acid biosynthesis; L-methionine biosynthesis via salvage pathway; S-methyl-5-thio-alpha-D-ribose 1-phosphate from S-methyl-5'-thioadenosine (hydrolase route): step 2/2. Functionally, catalyzes the phosphorylation of methylthioribose into methylthioribose-1-phosphate. In Bacillus cereus (strain AH187), this protein is Methylthioribose kinase.